The following is a 213-amino-acid chain: Putative 3-methyladenine DNA glycosylase (213 aa).

The protein belongs to the DNA glycosylase MPG family.

In Latilactobacillus sakei subsp. sakei (strain 23K) (Lactobacillus sakei subsp. sakei), this protein is Putative 3-methyladenine DNA glycosylase.